The primary structure comprises 310 residues: Glutaminase 1 (310 aa).

Substrate contacts are provided by Ser66, Asn117, Glu161, Asn168, Tyr192, Tyr244, and Val262. N6-acetyllysine is present on Lys294.

This sequence belongs to the glutaminase family. As to quaternary structure, homotetramer.

It carries out the reaction L-glutamine + H2O = L-glutamate + NH4(+). This is Glutaminase 1 from Escherichia coli O157:H7.